The following is a 290-amino-acid chain: ATP synthase gamma chain (290 aa).

The protein belongs to the ATPase gamma chain family. F-type ATPases have 2 components, CF(1) - the catalytic core - and CF(0) - the membrane proton channel. CF(1) has five subunits: alpha(3), beta(3), gamma(1), delta(1), epsilon(1). CF(0) has three main subunits: a, b and c.

It localises to the cell inner membrane. Functionally, produces ATP from ADP in the presence of a proton gradient across the membrane. The gamma chain is believed to be important in regulating ATPase activity and the flow of protons through the CF(0) complex. The sequence is that of ATP synthase gamma chain from Phenylobacterium zucineum (strain HLK1).